The chain runs to 515 residues: Maturase K (515 aa).

It belongs to the intron maturase 2 family. MatK subfamily.

It localises to the plastid. The protein localises to the chloroplast. In terms of biological role, usually encoded in the trnK tRNA gene intron. Probably assists in splicing its own and other chloroplast group II introns. The sequence is that of Maturase K from Pinus pinea (Italian stone pine).